The chain runs to 578 residues: Potassium-transporting ATPase potassium-binding subunit (578 aa).

11 helical membrane passes run Ala3–Leu23, Ala67–Leu87, Pro95–Thr115, Ala136–Val156, Leu181–Thr201, Leu264–Val284, Trp291–Ala311, Gly396–Gly416, Leu436–Pro456, Val504–Phe524, and Leu543–Ala563.

It belongs to the KdpA family. The system is composed of three essential subunits: KdpA, KdpB and KdpC.

It localises to the cell inner membrane. Its function is as follows. Part of the high-affinity ATP-driven potassium transport (or Kdp) system, which catalyzes the hydrolysis of ATP coupled with the electrogenic transport of potassium into the cytoplasm. This subunit binds the periplasmic potassium ions and delivers the ions to the membrane domain of KdpB through an intramembrane tunnel. The sequence is that of Potassium-transporting ATPase potassium-binding subunit from Anaeromyxobacter dehalogenans (strain 2CP-C).